We begin with the raw amino-acid sequence, 169 residues long: Major pepsin inhibitor 3 (169 aa).

A signal peptide spans 1-20 (MHVWLILSLASLWTSSIAYS). A Pyrrolidone carboxylic acid modification is found at Gln-21. Disulfide bonds link Cys-33-Cys-79, Cys-68-Cys-86, and Cys-99-Cys-166. Positions 135 to 169 (EEQQENQPPSSGMPHGAVPAGGLSPPPPPSFCTVQ) are disordered. Residues 158-169 (SPPPPPSFCTVQ) show a composition bias toward pro residues.

It belongs to the protease inhibitor I33 family. As to expression, body wall.

Its subcellular location is the secreted. This is an inhibitor of the aspartic protease pepsin. In Ascaris suum (Pig roundworm), this protein is Major pepsin inhibitor 3.